The chain runs to 190 residues: Large ribosomal subunit protein uL6A (190 aa).

The protein belongs to the universal ribosomal protein uL6 family. As to quaternary structure, component of the large ribosomal subunit (LSU). Mature yeast ribosomes consist of a small (40S) and a large (60S) subunit. The 40S small subunit contains 1 molecule of ribosomal RNA (18S rRNA) and at least 33 different proteins. The large 60S subunit contains 3 rRNA molecules (25S, 5.8S and 5S rRNA) and at least 46 different proteins. uL6 lines the binding pocket for eukaryotic elongation factor 2 (eEF2).

It is found in the cytoplasm. Its subcellular location is the nucleus. Its function is as follows. Component of the ribosome, a large ribonucleoprotein complex responsible for the synthesis of proteins in the cell. The small ribosomal subunit (SSU) binds messenger RNAs (mRNAs) and translates the encoded message by selecting cognate aminoacyl-transfer RNA (tRNA) molecules. The large subunit (LSU) contains the ribosomal catalytic site termed the peptidyl transferase center (PTC), which catalyzes the formation of peptide bonds, thereby polymerizing the amino acids delivered by tRNAs into a polypeptide chain. The nascent polypeptides leave the ribosome through a tunnel in the LSU and interact with protein factors that function in enzymatic processing, targeting, and the membrane insertion of nascent chains at the exit of the ribosomal tunnel. In Schizosaccharomyces pombe (strain 972 / ATCC 24843) (Fission yeast), this protein is Large ribosomal subunit protein uL6A (rpl901).